A 706-amino-acid chain; its full sequence is Glycogen [starch] synthase (706 aa).

Residue Arg-26 participates in UDP binding. Residues His-191 and Arg-197 each contribute to the UDP-alpha-D-glucose site. His-277, Glu-278, Gln-280, His-283, and Lys-287 together coordinate alpha-D-glucose 6-phosphate. Arg-317 provides a ligand contact to UDP. Position 317 (Arg-317) interacts with UDP-alpha-D-glucose. His-491 is a binding site for alpha-D-glucose 6-phosphate. UDP-alpha-D-glucose-binding residues include Glu-500, Trp-502, and Gly-503. Thr-505 contributes to the UDP binding site. Residues Arg-572 and Arg-576 each contribute to the alpha-D-glucose 6-phosphate site. The disordered stretch occupies residues 670 to 706 (PEEEDPEEYPFPLTLKQRTGPGSPLDSIQGLQLNGTR).

It belongs to the glycosyltransferase 3 family. Interacts with glucogenin gnn; the interaction is direct.

The enzyme catalyses [(1-&gt;4)-alpha-D-glucosyl](n) + UDP-alpha-D-glucose = [(1-&gt;4)-alpha-D-glucosyl](n+1) + UDP + H(+). The protein operates within glycan biosynthesis; glycogen biosynthesis. Its activity is regulated as follows. Allosteric activation by glucose-6-phosphate, and phosphorylation by a cAMP-dependent kinase. Functionally, glycogen synthase participates in the glycogen biosynthetic process along with glycogenin and glycogen branching enzyme. Extends the primer composed of a few glucose units formed by glycogenin by adding new glucose units to it. In this context, glycogen synthase transfers the glycosyl residue from UDP-Glc to the non-reducing end of alpha-1,4-glucan. This Neurospora crassa (strain ATCC 24698 / 74-OR23-1A / CBS 708.71 / DSM 1257 / FGSC 987) protein is Glycogen [starch] synthase (gsy-1).